The sequence spans 396 residues: Methylthioribose kinase (396 aa).

ATP-binding positions include N44, K61, and 115 to 117; that span reads EDL. D233 serves as a coordination point for substrate. 250–252 serves as a coordination point for ATP; that stretch reads DPE. R340 serves as a coordination point for substrate.

The protein belongs to the methylthioribose kinase family. As to quaternary structure, homodimer.

It carries out the reaction 5-(methylsulfanyl)-D-ribose + ATP = 5-(methylsulfanyl)-alpha-D-ribose 1-phosphate + ADP + H(+). The protein operates within amino-acid biosynthesis; L-methionine biosynthesis via salvage pathway; S-methyl-5-thio-alpha-D-ribose 1-phosphate from S-methyl-5'-thioadenosine (hydrolase route): step 2/2. In terms of biological role, catalyzes the phosphorylation of methylthioribose into methylthioribose-1-phosphate. The sequence is that of Methylthioribose kinase from Geobacillus kaustophilus (strain HTA426).